Reading from the N-terminus, the 643-residue chain is 1-deoxy-D-xylulose-5-phosphate synthase (643 aa).

Thiamine diphosphate contacts are provided by residues H78 and 119–121 (AHS). D150 contributes to the Mg(2+) binding site. Residues 151–152 (GS), N179, Y288, and E370 each bind thiamine diphosphate. N179 provides a ligand contact to Mg(2+).

The protein belongs to the transketolase family. DXPS subfamily. As to quaternary structure, homodimer. It depends on Mg(2+) as a cofactor. Thiamine diphosphate serves as cofactor.

It carries out the reaction D-glyceraldehyde 3-phosphate + pyruvate + H(+) = 1-deoxy-D-xylulose 5-phosphate + CO2. Its pathway is metabolic intermediate biosynthesis; 1-deoxy-D-xylulose 5-phosphate biosynthesis; 1-deoxy-D-xylulose 5-phosphate from D-glyceraldehyde 3-phosphate and pyruvate: step 1/1. In terms of biological role, catalyzes the acyloin condensation reaction between C atoms 2 and 3 of pyruvate and glyceraldehyde 3-phosphate to yield 1-deoxy-D-xylulose-5-phosphate (DXP). The protein is 1-deoxy-D-xylulose-5-phosphate synthase of Brucella melitensis biotype 2 (strain ATCC 23457).